The chain runs to 252 residues: Octanoyltransferase (252 aa).

The BPL/LPL catalytic domain occupies 56–237; sequence ADTGDEIWLV…RLIANLDGAS (182 aa). Substrate-binding positions include 96–103, 168–170, and 181–183; these read RGGQITYH, ALG, and GLS. The Acyl-thioester intermediate role is filled by C199.

This sequence belongs to the LipB family.

Its subcellular location is the cytoplasm. It catalyses the reaction octanoyl-[ACP] + L-lysyl-[protein] = N(6)-octanoyl-L-lysyl-[protein] + holo-[ACP] + H(+). It participates in protein modification; protein lipoylation via endogenous pathway; protein N(6)-(lipoyl)lysine from octanoyl-[acyl-carrier-protein]: step 1/2. Catalyzes the transfer of endogenously produced octanoic acid from octanoyl-acyl-carrier-protein onto the lipoyl domains of lipoate-dependent enzymes. Lipoyl-ACP can also act as a substrate although octanoyl-ACP is likely to be the physiological substrate. This Burkholderia lata (strain ATCC 17760 / DSM 23089 / LMG 22485 / NCIMB 9086 / R18194 / 383) protein is Octanoyltransferase.